The sequence spans 410 residues: Peptidase T-like protein YPO1009/y3403/YP_3421 (410 aa).

H82 contacts Zn(2+). Residue D84 is part of the active site. D144 serves as a coordination point for Zn(2+). Catalysis depends on E176, which acts as the Proton acceptor. Zn(2+) is bound by residues E177, D200, and H382.

The protein belongs to the peptidase M20B family. Zn(2+) serves as cofactor.

The chain is Peptidase T-like protein YPO1009/y3403/YP_3421 from Yersinia pestis.